A 458-amino-acid polypeptide reads, in one-letter code: Argininosuccinate lyase (458 aa).

Belongs to the lyase 1 family. Argininosuccinate lyase subfamily.

It is found in the cytoplasm. The catalysed reaction is 2-(N(omega)-L-arginino)succinate = fumarate + L-arginine. Its pathway is amino-acid biosynthesis; L-arginine biosynthesis; L-arginine from L-ornithine and carbamoyl phosphate: step 3/3. The sequence is that of Argininosuccinate lyase from Trichlorobacter lovleyi (strain ATCC BAA-1151 / DSM 17278 / SZ) (Geobacter lovleyi).